We begin with the raw amino-acid sequence, 371 residues long: D-alanine--D-alanine ligase (371 aa).

The ATP-grasp domain maps to 154 to 361; the sequence is KKLLVAEGLP…YPTLLAAMVD (208 aa). ATP is bound at residue 182–237; sequence RERLGLPVFVKPARGGSSIGVSRVSDWAELPAAIEAARRHDPKVIVEAGIAGRELE. The Mg(2+) site is built by D316, E328, and N330.

The protein belongs to the D-alanine--D-alanine ligase family. Mg(2+) is required as a cofactor. Mn(2+) serves as cofactor.

It is found in the cytoplasm. The catalysed reaction is 2 D-alanine + ATP = D-alanyl-D-alanine + ADP + phosphate + H(+). It participates in cell wall biogenesis; peptidoglycan biosynthesis. Functionally, cell wall formation. The polypeptide is D-alanine--D-alanine ligase (Mycobacterium sp. (strain KMS)).